Here is a 432-residue protein sequence, read N- to C-terminus: 3-phosphoshikimate 1-carboxyvinyltransferase (432 aa).

Residues lysine 23, serine 24, and arginine 28 each coordinate 3-phosphoshikimate. Position 23 (lysine 23) interacts with phosphoenolpyruvate. Positions 95 and 123 each coordinate phosphoenolpyruvate. 3-phosphoshikimate is bound by residues serine 167, glutamine 169, aspartate 317, and lysine 344. Residue glutamine 169 participates in phosphoenolpyruvate binding. The Proton acceptor role is filled by aspartate 317. Positions 348 and 390 each coordinate phosphoenolpyruvate.

Belongs to the EPSP synthase family. As to quaternary structure, monomer.

The protein resides in the cytoplasm. The catalysed reaction is 3-phosphoshikimate + phosphoenolpyruvate = 5-O-(1-carboxyvinyl)-3-phosphoshikimate + phosphate. The protein operates within metabolic intermediate biosynthesis; chorismate biosynthesis; chorismate from D-erythrose 4-phosphate and phosphoenolpyruvate: step 6/7. Its function is as follows. Catalyzes the transfer of the enolpyruvyl moiety of phosphoenolpyruvate (PEP) to the 5-hydroxyl of shikimate-3-phosphate (S3P) to produce enolpyruvyl shikimate-3-phosphate and inorganic phosphate. This Staphylococcus aureus (strain bovine RF122 / ET3-1) protein is 3-phosphoshikimate 1-carboxyvinyltransferase.